A 322-amino-acid polypeptide reads, in one-letter code: Exosome complex component RRP4 homolog (322 aa).

The S1 motif domain maps to 94–172 (GDIVVGRVIE…HDGSLQLQAR (79 aa)). A KH domain is found at 182–237 (GQLLKVDPYLVKRSKHHFHYVESLGIDLIIGCNGFIWVGEHVEVRDPMAIDDQKDE).

This sequence belongs to the RRP4 family. In terms of assembly, component of the RNA exosome complex. Interacts with RPP41. In terms of tissue distribution, expressed in roots, stems, rosette and cauline leaves, flowers and siliques.

The protein localises to the cytoplasm. The protein resides in the nucleus. It is found in the nucleolus. Non-catalytic component of the RNA exosome complex which has 3'-&gt;5' exoribonuclease activity and participates in a multitude of cellular RNA processing, maturation and degradation events. In vitro, is an active and distributive 3'-&gt;5' exonuclease requiring a free 3'-OH on the substrate and releasing nucleoside 5'-monophosphates. Required for normal embryo development. The polypeptide is Exosome complex component RRP4 homolog (Arabidopsis thaliana (Mouse-ear cress)).